The sequence spans 194 residues: MPNWGGGNKCGACGRTVYHAEEVQCDGRSFHRCCFLCMVCRKNLDSTTVAIHDAEVYCKSCYGKKYGPKGYGYGQGAGTLNMDRGERLGIKPESTPSPHRPTTNPNTSKFAQKFGGAEKCSRCGDSVYAAEKVIGAGKPWHKNCFRCAKCGKSLESTTLTEKEGEIYCKGCYAKNFGPKGFGYGQGAGALVHAQ.

The LIM zinc-binding 1 domain occupies 10–61 (CGACGRTVYHAEEVQCDGRSFHRCCFLCMVCRKNLDSTTVAIHDAEVYCKSC). Positions 64–69 (KKYGPK) match the Nuclear localization signal motif. The 52-residue stretch at 120–171 (CSRCGDSVYAAEKVIGAGKPWHKNCFRCAKCGKSLESTTLTEKEGEIYCKGC) folds into the LIM zinc-binding 2 domain.

The protein localises to the nucleus. Totally down-regulated in transformed cells. May therefore take part in the control of cell growth and differentiation. The polypeptide is Cysteine and glycine-rich protein 2 (CSRP2) (Gallus gallus (Chicken)).